A 44-amino-acid chain; its full sequence is Protein PsbN (44 aa).

A helical membrane pass occupies residues 6–26 (FFFTFFLWFLLLSATGYSIYV).

The protein belongs to the PsbN family.

Its subcellular location is the plastid. It localises to the chloroplast thylakoid membrane. In terms of biological role, may play a role in photosystem I and II biogenesis. The sequence is that of Protein PsbN from Tetradesmus obliquus (Green alga).